A 292-amino-acid chain; its full sequence is Protein LicB (292 aa).

2 EamA domains span residues 70–139 (ALSG…LLAI) and 160–286 (LGWS…VTLY).

The chain is Protein LicB (licB) from Haemophilus influenzae (strain ATCC 51907 / DSM 11121 / KW20 / Rd).